A 102-amino-acid chain; its full sequence is Protein V2 (102 aa).

In terms of biological role, may be involved in the regulation of ssDNA versus dsDNA levels. The polypeptide is Protein V2 (Beet curly top virus (strain California/Logan) (BCTV)).